A 502-amino-acid chain; its full sequence is NAD(P)H-quinone oxidoreductase subunit 2, chloroplastic (502 aa).

14 consecutive transmembrane segments (helical) span residues 15 to 35 (VLPE…DLIF), 42 to 62 (VLPY…LFQW), 79 to 99 (LSIA…LLSI), 108 to 128 (TLSE…LLCG), 132 to 152 (ILMI…LTGY), 167 to 187 (LLIG…LYGL), 210 to 230 (LASL…IAAA), 253 to 275 (VSSK…PYII), 278 to 298 (WHNI…IIAI), 307 to 327 (LGYS…AGNI), 334 to 354 (LVYM…VILF), 375 to 395 (ILAL…PFGG), 413 to 433 (LLVF…IKII), and 468 to 488 (ILIC…IISI).

The protein belongs to the complex I subunit 2 family. As to quaternary structure, NDH is composed of at least 16 different subunits, 5 of which are encoded in the nucleus.

The protein resides in the plastid. It localises to the chloroplast thylakoid membrane. It carries out the reaction a plastoquinone + NADH + (n+1) H(+)(in) = a plastoquinol + NAD(+) + n H(+)(out). It catalyses the reaction a plastoquinone + NADPH + (n+1) H(+)(in) = a plastoquinol + NADP(+) + n H(+)(out). NDH shuttles electrons from NAD(P)H:plastoquinone, via FMN and iron-sulfur (Fe-S) centers, to quinones in the photosynthetic chain and possibly in a chloroplast respiratory chain. The immediate electron acceptor for the enzyme in this species is believed to be plastoquinone. Couples the redox reaction to proton translocation, and thus conserves the redox energy in a proton gradient. The sequence is that of NAD(P)H-quinone oxidoreductase subunit 2, chloroplastic from Mesostigma viride (Green alga).